The following is a 256-amino-acid chain: Trans-aconitate 2-methyltransferase (256 aa).

Belongs to the methyltransferase superfamily. Tam family.

The protein resides in the cytoplasm. It catalyses the reaction trans-aconitate + S-adenosyl-L-methionine = (E)-3-(methoxycarbonyl)pent-2-enedioate + S-adenosyl-L-homocysteine. Functionally, catalyzes the S-adenosylmethionine monomethyl esterification of trans-aconitate. In Rhizobium etli (strain ATCC 51251 / DSM 11541 / JCM 21823 / NBRC 15573 / CFN 42), this protein is Trans-aconitate 2-methyltransferase.